The following is a 605-amino-acid chain: Dihydrogeodin oxidase (605 aa).

A signal peptide spans 1 to 18; the sequence is MPSLKDWVVAGLVPMTIA. N-linked (GlcNAc...) asparagine glycans are attached at residues Asn27, Asn107, and Asn112. Plastocyanin-like domains are found at residues 65-183, 189-347, and 424-567; these read TVTQ…GPSS, DLGP…YDES, and YVDW…KIKP. Residues His117, His119, His161, and His163 each contribute to the Cu cation site. N-linked (GlcNAc...) asparagine glycosylation is found at Asn278 and Asn467. Positions 484, 487, 489, 543, 544, 545, and 549 each coordinate Cu cation.

It belongs to the multicopper oxidase family. Cu cation is required as a cofactor.

The catalysed reaction is 2 dihydrogeodin + O2 + 2 H(+) = 2 (+)-geodin + 2 H2O. It functions in the pathway secondary metabolite biosynthesis. In terms of biological role, dihydrogeodin oxidase; part of the gene cluster that mediates the biosynthesis of geodin, an intermediate in the biosynthesis of other natural products. The pathway begins with the synthesis of atrochrysone thioester by the polyketide synthase (PKS) gedC. The atrochrysone carboxyl ACP thioesterase gedB then breaks the thioester bond and releases the atrochrysone carboxylic acid from gedC. The atrochrysone carboxylic acid is then converted to atrochrysone which is further transformed into emodinanthrone. The next step is performed by the emodinanthrone oxygenase gedH that catalyzes the oxidation of emodinanthrone to emodin. Emodin O-methyltransferase encoded probably by gedA then catalyzes methylation of the 8-hydroxy group of emodin to form questin. Ring cleavage of questin by questin oxidase gedK leads to desmethylsulochrin via several intermediates including questin epoxide. Another methylation step probably catalyzed by methyltransferase gedG leads to the formation of sulochrin which is further converted to dihydrogeodin by the sulochrin halogenase gedL. Finally, the dihydrogeodin oxidase gedJ catalyzes the stereospecific phenol oxidative coupling reaction converting dihydrogeodin to geodin. The protein is Dihydrogeodin oxidase of Aspergillus terreus (strain NIH 2624 / FGSC A1156).